The primary structure comprises 215 residues: Adenylate kinase (215 aa).

Residue 10 to 15 (GAGKGT) participates in ATP binding. The NMP stretch occupies residues 30-59 (STGDIFRKNIKEKTELGQKVEGLLAQGKLV). AMP contacts are provided by residues threonine 31, arginine 36, 57–59 (KLV), 85–88 (GFPR), and glutamine 92. An LID region spans residues 126–163 (GRRVCPSCGASYHIDNNPTKVDGICDACQTPVIQREDD). Arginine 127 provides a ligand contact to ATP. Zn(2+)-binding residues include cysteine 130 and cysteine 133. 136–137 (SY) contributes to the ATP binding site. Zn(2+) is bound by residues cysteine 150 and cysteine 153. Residues arginine 160 and arginine 171 each coordinate AMP. Position 199 (leucine 199) interacts with ATP.

It belongs to the adenylate kinase family. Monomer.

It localises to the cytoplasm. The enzyme catalyses AMP + ATP = 2 ADP. The protein operates within purine metabolism; AMP biosynthesis via salvage pathway; AMP from ADP: step 1/1. Its function is as follows. Catalyzes the reversible transfer of the terminal phosphate group between ATP and AMP. Plays an important role in cellular energy homeostasis and in adenine nucleotide metabolism. The protein is Adenylate kinase of Finegoldia magna (strain ATCC 29328 / DSM 20472 / WAL 2508) (Peptostreptococcus magnus).